The sequence spans 337 residues: Eukaryotic translation initiation factor 3 subunit H (337 aa).

In terms of domain architecture, MPN spans 21-153; sequence VQCDGLAVMK…LKAYRLTPQA (133 aa).

The protein belongs to the eIF-3 subunit H family. Component of the eukaryotic translation initiation factor 3 (eIF-3) complex. The eIF-3 complex interacts with pix. Interacts with mxt.

It localises to the cytoplasm. Its function is as follows. Component of the eukaryotic translation initiation factor 3 (eIF-3) complex, which is involved in protein synthesis of a specialized repertoire of mRNAs and, together with other initiation factors, stimulates binding of mRNA and methionyl-tRNAi to the 40S ribosome. The eIF-3 complex specifically targets and initiates translation of a subset of mRNAs involved in cell proliferation. The chain is Eukaryotic translation initiation factor 3 subunit H from Drosophila pseudoobscura pseudoobscura (Fruit fly).